Reading from the N-terminus, the 160-residue chain is NADH-quinone oxidoreductase subunit I (160 aa).

4Fe-4S ferredoxin-type domains follow at residues 51 to 81 (LRRY…IEAA) and 91 to 120 (VRYD…EGPN). Positions 61, 64, 67, 71, 100, 103, 106, and 110 each coordinate [4Fe-4S] cluster.

It belongs to the complex I 23 kDa subunit family. NDH-1 is composed of 14 different subunits. Subunits NuoA, H, J, K, L, M, N constitute the membrane sector of the complex. It depends on [4Fe-4S] cluster as a cofactor.

It is found in the cell inner membrane. It carries out the reaction a quinone + NADH + 5 H(+)(in) = a quinol + NAD(+) + 4 H(+)(out). NDH-1 shuttles electrons from NADH, via FMN and iron-sulfur (Fe-S) centers, to quinones in the respiratory chain. The immediate electron acceptor for the enzyme in this species is believed to be ubiquinone. Couples the redox reaction to proton translocation (for every two electrons transferred, four hydrogen ions are translocated across the cytoplasmic membrane), and thus conserves the redox energy in a proton gradient. This is NADH-quinone oxidoreductase subunit I from Anaplasma marginale (strain St. Maries).